The chain runs to 90 residues: ATP synthase subunit c (90 aa).

The next 2 membrane-spanning stretches (helical) occupy residues Phe4–Ile24 and Ile53–Ile73.

The protein belongs to the ATPase C chain family. In terms of assembly, F-type ATPases have 2 components, F(1) - the catalytic core - and F(0) - the membrane proton channel. F(1) has five subunits: alpha(3), beta(3), gamma(1), delta(1), epsilon(1). F(0) has three main subunits: a(1), b(2) and c(10-14). The alpha and beta chains form an alternating ring which encloses part of the gamma chain. F(1) is attached to F(0) by a central stalk formed by the gamma and epsilon chains, while a peripheral stalk is formed by the delta and b chains.

Its subcellular location is the cell inner membrane. In terms of biological role, f(1)F(0) ATP synthase produces ATP from ADP in the presence of a proton or sodium gradient. F-type ATPases consist of two structural domains, F(1) containing the extramembraneous catalytic core and F(0) containing the membrane proton channel, linked together by a central stalk and a peripheral stalk. During catalysis, ATP synthesis in the catalytic domain of F(1) is coupled via a rotary mechanism of the central stalk subunits to proton translocation. Functionally, key component of the F(0) channel; it plays a direct role in translocation across the membrane. A homomeric c-ring of between 10-14 subunits forms the central stalk rotor element with the F(1) delta and epsilon subunits. This Syntrophobacter fumaroxidans (strain DSM 10017 / MPOB) protein is ATP synthase subunit c.